A 411-amino-acid chain; its full sequence is MSKLPTGVEIRGRYIRIWFMFRGKRCRETLKGWEITNSNIKKAGNLRALIVHEINSGEFEYLRRFPQSSTGAKMVTTRVIKTFGELCDIWTKIKETELTTNTMKKTKSQLKTLRIIICESTPISHIRYSDILNYRNELLHGETLYLDNPRSNKKGRTVRTVDNYIALLCSLLRFAYQSGFISTKPFEGVKKLQRNRIKPDPLSKTEFNALMESEKGQSQNLWKFAVYSGLRHGELAALAWEDVDLEKGIVNVRRNLTILDMFGPPKTNAGIRTVTLLQPALEALKEQYKLTGHHRKSEITFYHREYGRTEKQKLHFVFMPRVCNGKQKPYYSVSSLGARWNAAVKRAGIRRRNPYHTRHTFACWLLTAGANPAFIASQMGHETAQMVYEIYGMWIDDMNDEQIAMLNARLS.

A Core-binding (CB) domain is found at 81–176; sequence KTFGELCDIW…LLCSLLRFAY (96 aa). The Tyr recombinase domain maps to 197–404; sequence IKPDPLSKTE…IDDMNDEQIA (208 aa). Catalysis depends on residues arginine 231, lysine 266, arginine 358, and histidine 381. Tyrosine 391 functions as the O-(3'-phospho-DNA)-tyrosine intermediate in the catalytic mechanism.

Belongs to the 'phage' integrase family.

Functionally, integrase is necessary for integration of the phage into the host genome by site-specific recombination. In conjunction with excisionase, integrase is also necessary for excision of the prophage from the host genome. The chain is Prophage integrase IntR (intR) from Escherichia coli (strain K12).